The following is a 332-amino-acid chain: Fructose-1,6-bisphosphatase class 1 (332 aa).

Mg(2+)-binding residues include Glu-89, Asp-110, Leu-112, and Asp-113. Substrate-binding positions include 113 to 116, Asn-206, Tyr-239, 257 to 259, and Lys-269; these read DGSS and YLY. Residue Glu-275 participates in Mg(2+) binding.

It belongs to the FBPase class 1 family. As to quaternary structure, homotetramer. Requires Mg(2+) as cofactor.

Its subcellular location is the cytoplasm. It carries out the reaction beta-D-fructose 1,6-bisphosphate + H2O = beta-D-fructose 6-phosphate + phosphate. It functions in the pathway carbohydrate biosynthesis; gluconeogenesis. The polypeptide is Fructose-1,6-bisphosphatase class 1 (Salmonella typhimurium (strain LT2 / SGSC1412 / ATCC 700720)).